Here is a 171-residue protein sequence, read N- to C-terminus: Co-chaperone protein HscB (171 aa).

One can recognise a J domain in the interval 2–74 (DYFTLFGLPA…LMRAEYLLSL (73 aa)).

It belongs to the HscB family. In terms of assembly, interacts with HscA and stimulates its ATPase activity. Interacts with IscU.

Its function is as follows. Co-chaperone involved in the maturation of iron-sulfur cluster-containing proteins. Seems to help targeting proteins to be folded toward HscA. The protein is Co-chaperone protein HscB of Escherichia coli (strain SE11).